The chain runs to 320 residues: ATP-dependent 6-phosphofructokinase (320 aa).

G11 serves as a coordination point for ATP. Residue 21-25 (RAVTK) coordinates ADP. Residues 72 to 73 (RF) and 102 to 105 (GDGS) contribute to the ATP site. D103 is a Mg(2+) binding site. 125–127 (TID) provides a ligand contact to substrate. The Proton acceptor role is filled by D127. R154 serves as a coordination point for ADP. Residues R162 and 169 to 171 (MGR) each bind substrate. ADP is bound by residues 185–187 (GAD) and 213–215 (KDH). Substrate is bound by residues E222, R243, and 249-252 (HMQR).

The protein belongs to the phosphofructokinase type A (PFKA) family. ATP-dependent PFK group I subfamily. Prokaryotic clade 'B1' sub-subfamily. Homotetramer. The cofactor is Mg(2+).

The protein resides in the cytoplasm. It carries out the reaction beta-D-fructose 6-phosphate + ATP = beta-D-fructose 1,6-bisphosphate + ADP + H(+). The protein operates within carbohydrate degradation; glycolysis; D-glyceraldehyde 3-phosphate and glycerone phosphate from D-glucose: step 3/4. Allosterically activated by ADP and other diphosphonucleosides, and allosterically inhibited by phosphoenolpyruvate. Its function is as follows. Catalyzes the phosphorylation of D-fructose 6-phosphate to fructose 1,6-bisphosphate by ATP, the first committing step of glycolysis. In Lactobacillus acidophilus (strain ATCC 700396 / NCK56 / N2 / NCFM), this protein is ATP-dependent 6-phosphofructokinase.